Reading from the N-terminus, the 314-residue chain is uncharacterized protein (314 aa).

This sequence to M.leprae ML0607.

This is an uncharacterized protein from Mycobacterium bovis (strain ATCC BAA-935 / AF2122/97).